The chain runs to 110 residues: UPF0060 membrane protein Pmen_1247 (110 aa).

A run of 4 helical transmembrane segments spans residues 5–25 (LWFLLAAVFEIAGCYAFWMWL), 31–51 (AWWIAPGLLSLVLFALILTRV), 59–79 (AYAAYGGVYIVASLAWLALIE), and 84–104 (MLSDWLGAALCLAGAAIILFA).

Belongs to the UPF0060 family.

The protein localises to the cell inner membrane. The chain is UPF0060 membrane protein Pmen_1247 from Ectopseudomonas mendocina (strain ymp) (Pseudomonas mendocina).